The sequence spans 404 residues: MAAVPEVLQQQEEDRSKLRSVSVDLNVDPSLQIDIPDALSERDKVKFTVHTKTTLPTFQSPEFSVTRQHEDFVWLHDTLIETTDYAGLIIPPAPTKPDFDGPREKMQKLGEGEGSMTKEEFAKMKQELEAEYLAVFKKTVSSHEVFLQRLSSHPVLSKDRNFHVFLEYDQDLSVRRKNTKEMFGGFFKSVVKSADEVLFSGVKEVDDFFEQEKTFLINYYNRIKDSCAKADRMTRSHKNVADDYIHTAACLHSLALEEPTVIKKYLLKVAELFEKLRKVESRVSSDEDLKLTELLRYYMLNIEAAKDLLYRRTKALIDYENSNKALDKARLKSRDVKLAEAHQQECCQKFEQLSESAKDELINFKRKRVAAFRKNLIEMSELEIKHARNNVSLLQSCIDLFKNN.

Alanine 2 is modified (N-acetylalanine). One can recognise a PX domain in the interval 25–172; it reads LNVDPSLQID…HVFLEYDQDL (148 aa). A 1,2-diacyl-sn-glycero-3-phospho-(1D-myo-inositol-4,5-bisphosphate) is bound by residues 40 to 46, 99 to 105, and 113 to 116; these read SERDKVK, FDGPREK, and EGSM. The tract at residues 169 to 261 is interaction with DOCK1; sequence DQDLSVRRKN…HSLALEEPTV (93 aa). The membrane-binding amphipathic helix stretch occupies residues 183-200; sequence FGGFFKSVVKSADEVLFS. The residue at position 193 (serine 193) is a Phosphoserine. The 203-residue stretch at 202–404 folds into the BAR domain; the sequence is VKEVDDFFEQ…QSCIDLFKNN (203 aa). The residue at position 275 (lysine 275) is an N6-acetyllysine.

It belongs to the sorting nexin family. Forms heterodimers with BAR domain-containing sorting nexins SNX1 and SNX2; does not homodimerize. The heterodimers are proposed to self-assemble into helical arrays on the membrane to stabilize and expand local membrane curvature underlying endosomal tubule formation. Thought to be a component of the originally described retromer complex (also called SNX-BAR retromer) which is a pentamer containing the heterotrimeric retromer cargo-selective complex (CSC), also described as vacuolar protein sorting subcomplex (VPS), and a heterodimeric membrane-deforming subcomplex formed between SNX1 or SNX2 and SNX5 or SNX6 (also called SNX-BAR subcomplex); the respective CSC and SNX-BAR subcomplexes associate with low affinity. Interacts with SNX1, SNX2, VPS26A, VPS29, VPS35, DCTN1, DOCK1, MIB1, PIP5K1C. Interacts with HGS; increased by PIP5K1C kinase activity and by PtdIns(3P) and/or PtdIns(3,4)P2.

It localises to the endosome. Its subcellular location is the early endosome. It is found in the early endosome membrane. The protein resides in the cell membrane. The protein localises to the cytoplasmic vesicle membrane. It localises to the cytoplasm. Its subcellular location is the cell projection. It is found in the phagocytic cup. The protein resides in the ruffle. Its function is as follows. Involved in several stages of intracellular trafficking. Interacts with membranes containing phosphatidylinositol lipids. Acts in part as component of the retromer membrane-deforming SNX-BAR subcomplex. The SNX-BAR retromer mediates retrograde transport of cargo proteins from endosomes to the trans-Golgi network (TGN) and is involved in endosome-to-plasma membrane transport for cargo protein recycling. The SNX-BAR subcomplex functions to deform the donor membrane into a tubular profile called endosome-to-TGN transport carrier (ETC). Does not have in vitro vesicle-to-membrane remodeling activity. Involved in retrograde transport of lysosomal enzyme receptor IGF2R. May function as link between endosomal transport vesicles and dynactin. Plays a role in the internalization of EGFR after EGF stimulation. Involved in EGFR endosomal sorting and degradation; the function involves PIP5K1C and is retromer-independent. Together with PIP5K1C facilitates HGS interaction with ubiquitinated EGFR, which initiates EGFR sorting to intraluminal vesicles (ILVs) of the multivesicular body for subsequent lysosomal degradation. Involved in E-cadherin sorting and degradation; inhibits PIP5K1C-mediated E-cadherin degradation. Plays a role in macropinocytosis. The polypeptide is Sorting nexin-5 (SNX5) (Bos taurus (Bovine)).